Consider the following 238-residue polypeptide: MYILPAIDLKNGEVVRLVEGNYDNKTTYFKDPLEVLDFFIESGSSYLHVVDLDGASDGETINFKTIEKVIKKCDLFVEVGGGIRNEDTIKKYLDIGVKRTILGTAAVENIDFTNNMINKYKEHIAVSIDSRDRMIAVKGWKEINKQDSVEFCMKLDSMGIDTIIYTDISKDGKLSGTNLDIYKELREKISCNIIASGGVTFEDEIIKLRDMKINGAIVGKAIYEGKIDLKKIIEIAKQ.

The active-site Proton acceptor is Asp-8. Asp-129 functions as the Proton donor in the catalytic mechanism.

This sequence belongs to the HisA/HisF family.

It localises to the cytoplasm. The catalysed reaction is 1-(5-phospho-beta-D-ribosyl)-5-[(5-phospho-beta-D-ribosylamino)methylideneamino]imidazole-4-carboxamide = 5-[(5-phospho-1-deoxy-D-ribulos-1-ylimino)methylamino]-1-(5-phospho-beta-D-ribosyl)imidazole-4-carboxamide. Its pathway is amino-acid biosynthesis; L-histidine biosynthesis; L-histidine from 5-phospho-alpha-D-ribose 1-diphosphate: step 4/9. The sequence is that of 1-(5-phosphoribosyl)-5-[(5-phosphoribosylamino)methylideneamino] imidazole-4-carboxamide isomerase from Brachyspira hyodysenteriae (strain ATCC 49526 / WA1).